A 995-amino-acid polypeptide reads, in one-letter code: Zinc finger protein ZFPM1 (995 aa).

The segment covering 1–14 (MSRRKQSNPRQIKR) has biased composition (basic residues). The interval 1–103 (MSRRKQSNPR…EAAMASPWSG (103 aa)) is disordered. The span at 15–36 (SLRDMEAGEEAKAMDSSPKEQE) shows a compositional bias: basic and acidic residues. Acidic residues-rich tracts occupy residues 67-78 (SPEDPEDMEGQE) and 86-95 (EEKEEKEEEA). Phosphoserine is present on residues S99 and S143. The CCHC FOG-type 1 zinc finger occupies 249-282 (VINKDVFPCKDCGIWYRSERNLQAHLLYYCASRQ). Positions 257, 260, 273, and 278 each coordinate Zn(2+). S286 carries the phosphoserine modification. 3 C2H2-type zinc fingers span residues 303-327 (RVCP…MRSH), 333-355 (FVCL…LKVH), and 361-384 (GVCH…VTNH). The segment at 343–354 (TTKANCERHLKV) is interaction with TACC3. S397, S497, and S500 each carry phosphoserine. Residues 424 to 526 (PLVPADKAPT…SSPGPGELTM (103 aa)) are disordered. Residues 509–525 (ELSSPTPGSSPGPGELT) show a composition bias toward low complexity. The CCHC FOG-type 2 zinc finger occupies 584–617 (FSGTKGATCFECEITFNNINNFYVHKRLYCSGRR). Residues C592, C595, H608, and C613 each coordinate Zn(2+). A disordered region spans residues 616-694 (RRAPEDPPTV…SVDDAEDDPS (79 aa)). A compositionally biased stretch (low complexity) spans 630–652 (AATGPARAPAGAAAEPDPSRSSP). 2 positions are modified to phosphoserine: S651 and S684. The CCHC FOG-type 3 zinc-finger motif lies at 690 to 723 (EDDPSRTLCEACNIRFSRHETYTVHKRYYCASRH). Zn(2+) contacts are provided by C698, C701, H714, and C719. Residues 721 to 827 (SRHDPPPRRP…PRRQSPDAPT (107 aa)) are disordered. Composition is skewed to pro residues over residues 728–740 (RRPP…PGPA) and 764–779 (GAPP…PVVP). The segment covering 785–800 (LPSSPRPGSASAGPAP) has biased composition (low complexity). S803 carries the post-translational modification Phosphoserine. The interaction with CTBP2 stretch occupies residues 811-817 (PIDLSKR). S822 bears the Phosphoserine mark. The CCHC FOG-type 4 zinc-finger motif lies at 830–863 (PALADYHECTACRVSFHSLEAYLAHKKYSCPAAP). 4 residues coordinate Zn(2+): C838, C841, H854, and C859. The segment at 868-891 (ALCPYCPPNGRVRGDLVEHLRQAH) adopts a C2H2-type 4 zinc-finger fold. Residues 892-960 (GLQVAKPAAS…APAPAPGGGG (69 aa)) form a disordered region. Over residues 908 to 922 (TPAERAPRDSPDGRA) the composition is skewed to basic and acidic residues. S925 and S927 each carry phosphoserine. A CCHC FOG-type 5 zinc finger spans residues 957–990 (GGGGGHRYCRLCNIRFSSLSTFIAHKKYYCSSHA). The Zn(2+) site is built by C965, C968, H981, and C986.

Belongs to the FOG (Friend of GATA) family. As to quaternary structure, interacts with the N-terminal zinc-finger of GATA1, GATA2 and GATA3. Interacts with corepressor CTBP2; this interaction is however not essential for corepressor activity in erythropoiesis. Interacts with TACC3. Mainly expressed in hematopoietic tissues. Expressed in the spleen, a primary site of hematopoiesis in the adult mouse, as well as in the liver and testis, but not in the heart, brain, lung, kidney, or skeletal muscle. Among hematopoietic cell lines, it is strongly expressed in erythroid and megakaryocytic cell lines. Expressed at low level in several lymphoid and early myeloid cell lines. Not expressed in mast cell and macrophage lines. Expressed in the heart, where it colocalizes with GATA4, GATA5 and GATA6.

It localises to the nucleus. Transcription regulator that plays an essential role in erythroid and megakaryocytic cell differentiation. Essential cofactor that acts via the formation of a heterodimer with transcription factors of the GATA family GATA1, GATA2 and GATA3. Such heterodimer can both activate or repress transcriptional activity, depending on the cell and promoter context. The heterodimer formed with GATA proteins is essential to activate expression of genes such as NFE2, ITGA2B, alpha- and beta-globin, while it represses expression of KLF1. May be involved in regulation of some genes in gonads. May also be involved in cardiac development, in a non-redundant way with ZFPM2/FOG2. The sequence is that of Zinc finger protein ZFPM1 (Zfpm1) from Mus musculus (Mouse).